Consider the following 372-residue polypeptide: MKIGIPREIKNNENRVGLSPSGVHALVESGHTVLVETNAGSGSFFEDVDYKEAGAEIVAEQAKVWDVDMVIKVKEPLESEYPYFKEGLVLFTYLHLANEEKLTQALIDRKVISIAYETVQLPDRSLPLLSPMSEVAGRMSAQVGAEFLQKLNGGMGILLGGVPGVPKGKVTIIGGGQAGTNAAKIALGLGADVTILDVNPKRLQQLDDLFGGRVHTIMSNPLNIELYVKQSDLVIGAVLIPGAKAPRLVTEDMIKQMKNGSVIIDIAIDQGGIFETTDKITTHDDPTYIKHGVVHYAVANMPGAVPRTSTLALNNATLPYALMLANKGYREAFKSNQPLSLGLNTYKGHVTNKGVAEAFEMEYKSVEEALHL.

H95 is an active-site residue. Residue K169–N199 participates in NAD(+) binding.

Belongs to the AlaDH/PNT family.

The catalysed reaction is L-alanine + NAD(+) + H2O = pyruvate + NH4(+) + NADH + H(+). It participates in amino-acid degradation; L-alanine degradation via dehydrogenase pathway; NH(3) and pyruvate from L-alanine: step 1/1. In terms of biological role, may play a role in cell wall synthesis as L-alanine is an important constituent of the peptidoglycan layer. In Staphylococcus aureus (strain MRSA252), this protein is Alanine dehydrogenase 2 (ald2).